We begin with the raw amino-acid sequence, 131 residues long: Small ribosomal subunit protein uS9 (131 aa).

Belongs to the universal ribosomal protein uS9 family.

The chain is Small ribosomal subunit protein uS9 from Mesoplasma florum (strain ATCC 33453 / NBRC 100688 / NCTC 11704 / L1) (Acholeplasma florum).